The following is a 169-amino-acid chain: Secreted RxLR effector protein BLN03 (169 aa).

The signal sequence occupies residues 1 to 21 (MRPRKYIVVVLLSIAYTMCLA). The dEER motif lies at 51 to 54 (TEER). Residues 149-169 (GSAFLFVIGFIVLLAFAMTAV) traverse the membrane as a helical segment.

It belongs to the RxLR effector family. In terms of assembly, interacts with host transcription factor NAC069.

Its subcellular location is the secreted. It is found in the host membrane. Its function is as follows. Secreted effector that inhibits stress-induced relocalization of the endoplasmic reticulum tail-anchored transcription factors to the nucleus, thus affecting stress responses. In Bremia lactucae (Lettuce downy mildew), this protein is Secreted RxLR effector protein BLN03.